Reading from the N-terminus, the 256-residue chain is Thiazole synthase (256 aa).

Lys-96 (schiff-base intermediate with DXP) is an active-site residue. Residues Gly-157, 184–185 (AG), and 206–207 (NT) contribute to the 1-deoxy-D-xylulose 5-phosphate site.

This sequence belongs to the ThiG family. As to quaternary structure, homotetramer. Forms heterodimers with either ThiH or ThiS.

It localises to the cytoplasm. The catalysed reaction is [ThiS sulfur-carrier protein]-C-terminal-Gly-aminoethanethioate + 2-iminoacetate + 1-deoxy-D-xylulose 5-phosphate = [ThiS sulfur-carrier protein]-C-terminal Gly-Gly + 2-[(2R,5Z)-2-carboxy-4-methylthiazol-5(2H)-ylidene]ethyl phosphate + 2 H2O + H(+). It functions in the pathway cofactor biosynthesis; thiamine diphosphate biosynthesis. In terms of biological role, catalyzes the rearrangement of 1-deoxy-D-xylulose 5-phosphate (DXP) to produce the thiazole phosphate moiety of thiamine. Sulfur is provided by the thiocarboxylate moiety of the carrier protein ThiS. In vitro, sulfur can be provided by H(2)S. The protein is Thiazole synthase of Brucella suis (strain ATCC 23445 / NCTC 10510).